Consider the following 78-residue polypeptide: UPF0369 protein RF_1112 (78 aa).

This sequence belongs to the SDHAF4 family.

This is UPF0369 protein RF_1112 from Rickettsia felis (strain ATCC VR-1525 / URRWXCal2) (Rickettsia azadi).